A 396-amino-acid polypeptide reads, in one-letter code: NADH-quinone oxidoreductase subunit D (396 aa).

Belongs to the complex I 49 kDa subunit family. In terms of assembly, NDH-1 is composed of 14 different subunits. Subunits NuoB, C, D, E, F, and G constitute the peripheral sector of the complex.

The protein resides in the cell inner membrane. The enzyme catalyses a quinone + NADH + 5 H(+)(in) = a quinol + NAD(+) + 4 H(+)(out). Its function is as follows. NDH-1 shuttles electrons from NADH, via FMN and iron-sulfur (Fe-S) centers, to quinones in the respiratory chain. The immediate electron acceptor for the enzyme in this species is believed to be ubiquinone. Couples the redox reaction to proton translocation (for every two electrons transferred, four hydrogen ions are translocated across the cytoplasmic membrane), and thus conserves the redox energy in a proton gradient. This is NADH-quinone oxidoreductase subunit D from Brucella melitensis biotype 1 (strain ATCC 23456 / CCUG 17765 / NCTC 10094 / 16M).